The chain runs to 143 residues: Transcriptional regulator MraZ (143 aa).

SpoVT-AbrB domains lie at 5–47 (EYQH…PQDE) and 76–119 (ATEC…SKER).

Belongs to the MraZ family. As to quaternary structure, forms oligomers.

The protein localises to the cytoplasm. The protein resides in the nucleoid. This is Transcriptional regulator MraZ from Brevibacillus brevis (strain 47 / JCM 6285 / NBRC 100599).